The following is a 229-amino-acid chain: Potassium/proton antiporter CemA (229 aa).

Transmembrane regions (helical) follow at residues 7-27 (FTPLLYFASIVFLPWWISLSF), 114-134 (IISFVILSGYSIFGNEELVIL), and 190-210 (ISGLVSTFPVILDTLLKYWIF).

Belongs to the CemA family.

The protein localises to the plastid. It localises to the chloroplast inner membrane. It carries out the reaction K(+)(in) + H(+)(out) = K(+)(out) + H(+)(in). Functionally, contributes to K(+)/H(+) antiport activity by supporting proton efflux to control proton extrusion and homeostasis in chloroplasts in a light-dependent manner to modulate photosynthesis. Prevents excessive induction of non-photochemical quenching (NPQ) under continuous-light conditions. Indirectly promotes efficient inorganic carbon uptake into chloroplasts. This is Potassium/proton antiporter CemA from Jasminum nudiflorum (Winter jasmine).